Consider the following 481-residue polypeptide: Glutamate--tRNA ligase (481 aa).

A 'HIGH' region motif is present at residues 9-19 (PSPTGNLHIGT). Positions 247 to 251 (KLSKR) match the 'KMSKS' region motif. K250 lines the ATP pocket.

The protein belongs to the class-I aminoacyl-tRNA synthetase family. Glutamate--tRNA ligase type 1 subfamily. As to quaternary structure, monomer.

Its subcellular location is the cytoplasm. The catalysed reaction is tRNA(Glu) + L-glutamate + ATP = L-glutamyl-tRNA(Glu) + AMP + diphosphate. Functionally, catalyzes the attachment of glutamate to tRNA(Glu) in a two-step reaction: glutamate is first activated by ATP to form Glu-AMP and then transferred to the acceptor end of tRNA(Glu). The chain is Glutamate--tRNA ligase from Nostoc punctiforme (strain ATCC 29133 / PCC 73102).